The following is a 180-amino-acid chain: Calcineurin subunit B type 1 (180 aa).

The N-myristoyl glycine moiety is linked to residue Gly-2. EF-hand domains follow at residues 25–60 (AELK…ALNP), 62–92 (LERV…LSHK), 94–129 (TKED…MVGT), and 135–170 (QLQQ…QEGI). The Ca(2+) site is built by Asp-38, Asp-40, Ser-42, Thr-44, Glu-49, Asp-70, Asn-72, Asp-74, Glu-76, Glu-81, Asp-107, Asp-109, Asp-111, and Glu-118. A canA/calcineurin A binding region spans residues 138-143 (QIVDKT). The Ca(2+) site is built by Asp-148, Asp-150, Asp-152, Lys-154, and Glu-159.

This sequence belongs to the calcineurin regulatory subunit family. Forms a complex composed of a calmodulin-dependent catalytic subunit canA (also known as calcineurin A) and a regulatory Ca(2+)-binding subunit cnbA (also known as calcineurin B).

In terms of biological role, regulatory subunit of calcineurin, a calcium-dependent, calmodulin stimulated protein phosphatase. Confers calcium sensitivity. Important for stalk formation. The chain is Calcineurin subunit B type 1 (cnbA) from Dictyostelium discoideum (Social amoeba).